A 263-amino-acid chain; its full sequence is Endonuclease 8 (263 aa).

The active-site Schiff-base intermediate with DNA is the proline 2. The active-site Proton donor is glutamate 3. Lysine 53 (proton donor; for beta-elimination activity) is an active-site residue. Residues glutamine 70, arginine 125, and asparagine 169 each contribute to the DNA site. The FPG-type zinc finger occupies 229–263; it reads KVFHRDGEACERCGGIIEKTTLSSRPFYWCPHCQK. Arginine 253 (proton donor; for delta-elimination activity) is an active-site residue.

It belongs to the FPG family. Requires Zn(2+) as cofactor.

The catalysed reaction is 2'-deoxyribonucleotide-(2'-deoxyribose 5'-phosphate)-2'-deoxyribonucleotide-DNA = a 3'-end 2'-deoxyribonucleotide-(2,3-dehydro-2,3-deoxyribose 5'-phosphate)-DNA + a 5'-end 5'-phospho-2'-deoxyribonucleoside-DNA + H(+). Its function is as follows. Involved in base excision repair of DNA damaged by oxidation or by mutagenic agents. Acts as a DNA glycosylase that recognizes and removes damaged bases. Has a preference for oxidized pyrimidines, such as thymine glycol, 5,6-dihydrouracil and 5,6-dihydrothymine. Has AP (apurinic/apyrimidinic) lyase activity and introduces nicks in the DNA strand. Cleaves the DNA backbone by beta-delta elimination to generate a single-strand break at the site of the removed base with both 3'- and 5'-phosphates. In Salmonella arizonae (strain ATCC BAA-731 / CDC346-86 / RSK2980), this protein is Endonuclease 8.